A 454-amino-acid chain; its full sequence is Probable xylan O-acetyltransferase 9 (454 aa).

Residues 1–15 are Cytoplasmic-facing; the sequence is MKAPPPPSPVAKRAR. Residues 16-36 traverse the membrane as a helical; Signal-anchor for type II membrane protein segment; the sequence is VSPFVFLLVLFLLLFSFLYGE. Over 37-454 the chain is Lumenal; the sequence is DLKELLGSQA…ELLYTKLFYP (418 aa). Disulfide bonds link Cys-101-Cys-152, Cys-123-Cys-188, Cys-132-Cys-435, and Cys-352-Cys-431. A GDS motif motif is present at residues 175–177; it reads GDS. Catalysis depends on Ser-177, which acts as the Nucleophile. N-linked (GlcNAc...) asparagine glycans are attached at residues Asn-219, Asn-293, and Asn-394. Asp-430 functions as the Proton donor in the catalytic mechanism. The short motif at 430–433 is the DXXH motif element; the sequence is DCVH. The active-site Proton acceptor is the His-433.

The protein belongs to the PC-esterase family. TBL subfamily.

It localises to the golgi apparatus membrane. Probable xylan acetyltransferase required for 2-O- and 3-O-monoacetylation of xylosyl residues in xylan. Possesses extremely low activity in vitro. The polypeptide is Probable xylan O-acetyltransferase 9 (Oryza sativa subsp. japonica (Rice)).